Reading from the N-terminus, the 329-residue chain is Mas-related G-protein coupled receptor member X2 (329 aa).

Topologically, residues 1 to 33 are extracellular; it reads MDPTTPAWGTESTTMNGNDQALPLFCGKETLIS. The helical transmembrane segment at 34–54 threads the bilayer; it reads VFLILFIALVGLVGNGFVLWL. At 55–63 the chain is on the cytoplasmic side; that stretch reads LGFRMRKNA. The helical transmembrane segment at 64 to 84 threads the bilayer; it reads FSVYVLSLAGADFLFLCFQII. Residues 85 to 96 are Extracellular-facing; sequence NCLVYLSNVFCS. The chain crosses the membrane as a helical span at residues 97 to 117; sequence ISINFPSFFITVMTCAYLAGL. Residues 118–144 are Cytoplasmic-facing; that stretch reads SMLSTISTERCLSVLWPIWYRCRRPRH. A helical membrane pass occupies residues 145–165; the sequence is LSAVACVLLWALSLLLSILEG. At 166–183 the chain is on the extracellular side; that stretch reads KFCGLFGDGDSGWCQTFD. The chain crosses the membrane as a helical span at residues 184–204; that stretch reads LITAAWLIFLFMVLCGSSLAL. The Cytoplasmic segment spans residues 205-227; that stretch reads LVRILCGSRGLPLTRLYLTILLT. The chain crosses the membrane as a helical span at residues 228 to 248; it reads VLVFLLCGLPFGIQWFLILWI. The Extracellular segment spans residues 249 to 263; the sequence is WKNSDVLFCHIHPVS. The helical transmembrane segment at 264–284 threads the bilayer; sequence VVLSSLNSSANPIIYFFVGSF. At 285 to 329 the chain is on the cytoplasmic side; the sequence is RKQWRLQQPILKLALQRALQDIAEVDHSEGCFRQGTPEMSRSSLV.

It belongs to the G-protein coupled receptor 1 family. Mas subfamily.

It localises to the cell membrane. Functionally, mast cell-specific receptor for basic secretagogues, i.e. cationic amphiphilic drugs, as well as endo- or exogenous peptides, consisting of a basic head group and a hydrophobic core. Recognizes and binds small molecules containing a cyclized tetrahydroisoquinoline (THIQ), such as non-steroidal neuromuscular blocking drugs (NMBDs), including tubocurarine and atracurium. In response to these compounds, mediates pseudo-allergic reactions characterized by histamine release, inflammation and airway contraction. This is Mas-related G-protein coupled receptor member X2 (MRGPRX2) from Pan troglodytes (Chimpanzee).